The primary structure comprises 625 residues: Probable potassium transport system protein Kup 2 (625 aa).

Helical transmembrane passes span 10–30 (LAALTLGAMGVVYGDIGTSPL), 47–67 (GVHLIGAVSVIFWGLMMVVTL), 104–124 (VLLLMGVFGAALFYGDSVITP), 140–160 (PAFKSYVLPISVTVLIGLFAV), 172–192 (FGPVIMLWFAVLSVTGVAEII), 214–234 (GWHMFVAVGAIVLAFTGVEAL), 250–270 (WLGLVLPALAINYMGQGALLM), 283–303 (LFPQAWLMPAVVLATLATVIA), 347–367 (WLLLISVLLAVVGFGSSSALA), 369–389 (AYGIAVTMTMLITTALTFFVV), 396–416 (PLPVALAATAVFLALDTLLVV), and 422–442 (FFQGGWFPLVLGLVIFTVMAT).

Belongs to the HAK/KUP transporter (TC 2.A.72) family.

Its subcellular location is the cell inner membrane. The enzyme catalyses K(+)(in) + H(+)(in) = K(+)(out) + H(+)(out). Its function is as follows. Transport of potassium into the cell. Likely operates as a K(+):H(+) symporter. The sequence is that of Probable potassium transport system protein Kup 2 from Albidiferax ferrireducens (strain ATCC BAA-621 / DSM 15236 / T118) (Rhodoferax ferrireducens).